The sequence spans 296 residues: 5'-3' exonuclease (296 aa).

In terms of domain architecture, 5'-3' exonuclease spans 175–262; it reads VMPKALIDIK…VPLACTLKDA (88 aa).

5'-3' exonuclease acting preferentially on double-stranded DNA. This is 5'-3' exonuclease (ypcP) from Bacillus subtilis (strain 168).